Reading from the N-terminus, the 216-residue chain is Squamosa promoter-binding-like protein 13 (216 aa).

Residues 32 to 110 are disordered; sequence GDGGAALPSP…PSGGGGGPRC (79 aa). A compositionally biased stretch (low complexity) spans 67 to 91; that stretch reads SSSAAVAAGASSSSSSSSVAAAARR. Over residues 94–108 the composition is skewed to gly residues; it reads GRAGGGAPSGGGGGP. An SBP-type zinc finger spans residues 107–184; sequence GPRCQVERCG…AGHNERRRKS (78 aa). Residues C110, C115, C132, H135, C151, C154, H158, and C170 each coordinate Zn(2+). Residues 167 to 183 carry the Bipartite nuclear localization signal motif; that stretch reads KRSCRRRLAGHNERRRK. The interval 175-216 is disordered; the sequence is AGHNERRRKSAADTAHGENCRHADQDAGRSHQGTGNPPFQIR. Over residues 189–203 the composition is skewed to basic and acidic residues; it reads AHGENCRHADQDAGR. Polar residues predominate over residues 205–216; that stretch reads HQGTGNPPFQIR.

In terms of tissue distribution, ubiquitous.

The protein resides in the nucleus. In terms of biological role, trans-acting factor that binds specifically to the consensus nucleotide sequence 5'-TNCGTACAA-3'. May be involved in panicle development. This is Squamosa promoter-binding-like protein 13 (SPL13) from Oryza sativa subsp. japonica (Rice).